The following is a 442-amino-acid chain: tRNA modification GTPase MnmE (442 aa).

Residues R27, E84, and K124 each contribute to the (6S)-5-formyl-5,6,7,8-tetrahydrofolate site. Residues 221–366 (GLHVVIVGAP…LLDALQAFAE (146 aa)) enclose the TrmE-type G domain. GTP-binding positions include 231–236 (NAGKSS), 250–256 (SEEAGTT), and 275–278 (DTAG). 2 residues coordinate Mg(2+): S235 and T256. K442 provides a ligand contact to (6S)-5-formyl-5,6,7,8-tetrahydrofolate.

This sequence belongs to the TRAFAC class TrmE-Era-EngA-EngB-Septin-like GTPase superfamily. TrmE GTPase family. In terms of assembly, homodimer. Heterotetramer of two MnmE and two MnmG subunits. It depends on K(+) as a cofactor.

The protein resides in the cytoplasm. In terms of biological role, exhibits a very high intrinsic GTPase hydrolysis rate. Involved in the addition of a carboxymethylaminomethyl (cmnm) group at the wobble position (U34) of certain tRNAs, forming tRNA-cmnm(5)s(2)U34. The chain is tRNA modification GTPase MnmE from Brucella abortus (strain 2308).